An 854-amino-acid polypeptide reads, in one-letter code: Probable inorganic carbon transporter subunit DabA (854 aa).

Zn(2+) contacts are provided by Cys378, Asp380, His560, and Cys575.

This sequence belongs to the inorganic carbon transporter (TC 9.A.2) DabA family. In terms of assembly, forms a complex with DabB. Requires Zn(2+) as cofactor.

It is found in the cell membrane. Its function is as follows. Part of an energy-coupled inorganic carbon pump. The sequence is that of Probable inorganic carbon transporter subunit DabA from Bacillus cereus (strain ATCC 14579 / DSM 31 / CCUG 7414 / JCM 2152 / NBRC 15305 / NCIMB 9373 / NCTC 2599 / NRRL B-3711).